Reading from the N-terminus, the 810-residue chain is S-adenosyl-L-methionine-dependent tRNA 4-demethylwyosine synthase (810 aa).

Disordered regions lie at residues 86-116 (NGGG…KGGC) and 156-176 (RSST…VGKK). The segment covering 104–116 (GCCSSKGGKKGGC) has biased composition (low complexity). The span at 159–172 (TPKVFSKNSSSNSR) shows a compositional bias: polar residues. The Flavodoxin-like domain occupies 205–360 (IYVLYSSLQG…KIDEWTSLLA (156 aa)). FMN-binding positions include 211–215 (SLQGA) and 304–337 (VLGL…RRIF). Positions 374 to 397 (DENADSEEDEEEGNGSDELGDVED) are enriched in acidic residues. The interval 374–407 (DENADSEEDEEEGNGSDELGDVEDIGGKGSNGKF) is disordered. The region spanning 463–713 (FNIASSRCME…ELQRRGLHYD (251 aa)) is the Radical SAM core domain. The [4Fe-4S] cluster site is built by C479, C483, and C486. Residue K496 forms a Glycyl lysine isopeptide (Lys-Gly) (interchain with G-Cter in ubiquitin) linkage. The disordered stretch occupies residues 782-810 (RVYRKDKKKQNKENQETTTRETPLPPIPA).

The protein belongs to the TYW1 family. Requires [4Fe-4S] cluster as cofactor.

The protein localises to the endoplasmic reticulum. It carries out the reaction N(1)-methylguanosine(37) in tRNA(Phe) + pyruvate + S-adenosyl-L-methionine = 4-demethylwyosine(37) in tRNA(Phe) + 5'-deoxyadenosine + L-methionine + CO2 + H2O. The protein operates within tRNA modification; wybutosine-tRNA(Phe) biosynthesis. Its function is as follows. Component of the wybutosine biosynthesis pathway. Wybutosine is a hyper modified guanosine with a tricyclic base found at the 3'-position adjacent to the anticodon of eukaryotic phenylalanine tRNA. Catalyzes the condensation of N-methylguanine with 2 carbon atoms from pyruvate to form the tricyclic 4-demethylwyosine, an intermediate in wybutosine biosynthesis. This is S-adenosyl-L-methionine-dependent tRNA 4-demethylwyosine synthase (TYW1) from Saccharomyces cerevisiae (strain ATCC 204508 / S288c) (Baker's yeast).